Consider the following 419-residue polypeptide: Tubby-like protein 4 (419 aa).

The disordered stretch occupies residues 1-96; it reads MAATKREPLR…EREEEEEGSS (96 aa). Residues 33–57 are compositionally biased toward basic and acidic residues; the sequence is AKEKEKENEVPTEIGRGKDGGEKKP.

It belongs to the TUB family.

This Oryza sativa subsp. japonica (Rice) protein is Tubby-like protein 4 (TULP4).